A 660-amino-acid polypeptide reads, in one-letter code: Phosphatidylinositol-3-phosphate phosphatase MTMR7 (660 aa).

Residues 126 to 504 (GWVLIDLSEE…FMYKFWSGMY (379 aa)) enclose the Myotubularin phosphatase domain. Residues N250, N275, and I276 each coordinate a 1,2-diacyl-sn-glycero-3-phospho-(1D-myo-inositol-3-phosphate). Catalysis depends on C338, which acts as the Phosphocysteine intermediate. Residues S339, D340, G341, W342, D343, R344, and R384 each contribute to the a 1,2-diacyl-sn-glycero-3-phospho-(1D-myo-inositol-3-phosphate) site. The stretch at 521-551 (LMAVKEETQQLEEELEALEERLEKIQKVQLN) forms a coiled coil. The tract at residues 554–660 (KVKSKQSEPS…DSDEAVFLTA (107 aa)) is disordered. Residues 566–596 (SGFSTSDNSIANTPQDYSGNMKSFPSRSPSQ) show a composition bias toward polar residues. Position 578 is a phosphothreonine (T578). Basic and acidic residues predominate over residues 641–653 (APSEDSGKDRDSD).

The protein belongs to the protein-tyrosine phosphatase family. Non-receptor class myotubularin subfamily. Heterodimer (via C-terminus) with MTMR9 (via coiled coil domain); the interaction enhances MTMR7 catalytic activity. Does not homodimerize. Interacts with RAB1B (in GDP-bound form). As to expression, expressed specifically in brain.

The protein resides in the cytoplasm. It localises to the endomembrane system. The enzyme catalyses a 1,2-diacyl-sn-glycero-3-phospho-(1D-myo-inositol-3-phosphate) + H2O = a 1,2-diacyl-sn-glycero-3-phospho-(1D-myo-inositol) + phosphate. It catalyses the reaction 1D-myo-inositol 1,3-bisphosphate + H2O = 1D-myo-inositol 1-phosphate + phosphate. Its activity is regulated as follows. Interaction with MTMR9 increases phosphatase activity. Functionally, lipid phosphatase that specifically dephosphorylates the D-3 position of phosphatidylinositol 3-phosphate (PtdIns(3)P) and inositol 1,3-bisphosphate (Ins(1,3)P2). The sequence is that of Phosphatidylinositol-3-phosphate phosphatase MTMR7 from Homo sapiens (Human).